Reading from the N-terminus, the 83-residue chain is uncharacterized protein (83 aa).

This is an uncharacterized protein from Bacillus subtilis (strain 168).